Consider the following 558-residue polypeptide: Ribonuclease Y (558 aa).

Residues 3 to 23 traverse the membrane as a helical segment; the sequence is VLSILLILVAVGVGIFVGRQF. Residues 248–311 form the KH domain; that stretch reads TTTTVELPSN…EIAKEALQRL (64 aa). The HD domain occupies 374 to 467; sequence VLLHSKEVAY…VCAADALSAA (94 aa).

Belongs to the RNase Y family.

It localises to the cell membrane. Its function is as follows. Endoribonuclease that initiates mRNA decay. This Aquifex aeolicus (strain VF5) protein is Ribonuclease Y.